Consider the following 264-residue polypeptide: S-adenosylmethionine decarboxylase proenzyme (264 aa).

Catalysis depends on serine 112, which acts as the Schiff-base intermediate with substrate; via pyruvic acid. Serine 112 bears the Pyruvic acid (Ser); by autocatalysis mark. Histidine 117 functions as the Proton acceptor; for processing activity in the catalytic mechanism. Catalysis depends on cysteine 140, which acts as the Proton donor; for catalytic activity.

This sequence belongs to the prokaryotic AdoMetDC family. Type 2 subfamily. In terms of assembly, heterooctamer of four alpha and four beta chains arranged as a tetramer of alpha/beta heterodimers. Pyruvate is required as a cofactor. Is synthesized initially as an inactive proenzyme. Formation of the active enzyme involves a self-maturation process in which the active site pyruvoyl group is generated from an internal serine residue via an autocatalytic post-translational modification. Two non-identical subunits are generated from the proenzyme in this reaction, and the pyruvate is formed at the N-terminus of the alpha chain, which is derived from the carboxyl end of the proenzyme. The post-translation cleavage follows an unusual pathway, termed non-hydrolytic serinolysis, in which the side chain hydroxyl group of the serine supplies its oxygen atom to form the C-terminus of the beta chain, while the remainder of the serine residue undergoes an oxidative deamination to produce ammonia and the pyruvoyl group blocking the N-terminus of the alpha chain.

It catalyses the reaction S-adenosyl-L-methionine + H(+) = S-adenosyl 3-(methylsulfanyl)propylamine + CO2. It functions in the pathway amine and polyamine biosynthesis; S-adenosylmethioninamine biosynthesis; S-adenosylmethioninamine from S-adenosyl-L-methionine: step 1/1. Its function is as follows. Catalyzes the decarboxylation of S-adenosylmethionine to S-adenosylmethioninamine (dcAdoMet), the propylamine donor required for the synthesis of the polyamines spermine and spermidine from the diamine putrescine. The polypeptide is S-adenosylmethionine decarboxylase proenzyme (Salmonella dublin (strain CT_02021853)).